The following is a 333-amino-acid chain: tRNA uridine(34) hydroxylase (333 aa).

The Rhodanese domain maps to 123 to 217 (SDPEVILVDT…YLEEIKQEES (95 aa)). Residue Cys-177 is the Cysteine persulfide intermediate of the active site.

It belongs to the TrhO family.

The catalysed reaction is uridine(34) in tRNA + AH2 + O2 = 5-hydroxyuridine(34) in tRNA + A + H2O. In terms of biological role, catalyzes oxygen-dependent 5-hydroxyuridine (ho5U) modification at position 34 in tRNAs. The protein is tRNA uridine(34) hydroxylase of Shewanella sp. (strain MR-7).